Reading from the N-terminus, the 117-residue chain is Immunoglobulin lambda variable 7-43 (117 aa).

The first 19 residues, 1-19 (MAWTPLFLFLLTCCPGSNS), serve as a signal peptide directing secretion. Residues 20–44 (QTVVTQEPSLTVSPGGTVTLTCASS) are framework-1. Residues 20-117 (QTVVTQEPSL…YCLLYYGGAQ (98 aa)) form the Ig-like domain. Cysteine 41 and cysteine 109 are oxidised to a cystine. Positions 45 to 53 (TGAVTSGYY) are complementarity-determining-1. A framework-2 region spans residues 54 to 70 (PNWFQQKPGQAPRALIY). Residues 71–73 (STS) are complementarity-determining-2. The segment at 74 to 109 (NKHSWTPARFSGSLLGGKAALTLSGVQPEDEAEYYC) is framework-3. Residues 110 to 117 (LLYYGGAQ) form a complementarity-determining-3 region.

Immunoglobulins are composed of two identical heavy chains and two identical light chains; disulfide-linked.

Its subcellular location is the secreted. It is found in the cell membrane. In terms of biological role, v region of the variable domain of immunoglobulin light chains that participates in the antigen recognition. Immunoglobulins, also known as antibodies, are membrane-bound or secreted glycoproteins produced by B lymphocytes. In the recognition phase of humoral immunity, the membrane-bound immunoglobulins serve as receptors which, upon binding of a specific antigen, trigger the clonal expansion and differentiation of B lymphocytes into immunoglobulins-secreting plasma cells. Secreted immunoglobulins mediate the effector phase of humoral immunity, which results in the elimination of bound antigens. The antigen binding site is formed by the variable domain of one heavy chain, together with that of its associated light chain. Thus, each immunoglobulin has two antigen binding sites with remarkable affinity for a particular antigen. The variable domains are assembled by a process called V-(D)-J rearrangement and can then be subjected to somatic hypermutations which, after exposure to antigen and selection, allow affinity maturation for a particular antigen. In Homo sapiens (Human), this protein is Immunoglobulin lambda variable 7-43.